The sequence spans 907 residues: Polyphosphoinositide phosphatase (907 aa).

Residues 154-547 (FQNVDLSSNF…GDTLSLQYGG (394 aa)) form the SAC domain. A disordered region spans residues 707-790 (GIDPSPFTVR…MTDTGDSAKA (84 aa)). Residues 758–770 (SEDDSGTDREDEG) are compositionally biased toward acidic residues.

As to quaternary structure, component of the PI(3,5)P2 regulatory complex/PAS complex, at least composed of PIKFYVE, FIG4 and VAC14. VAC14 nucleates the assembly of the complex and serves as a scaffold by pentamerizing into a star-shaped structure, which can bind a single copy each of PIKFYVE and FIG4 and coordinates their activities. Wide-spread.

The protein localises to the endosome membrane. The enzyme catalyses a 1,2-diacyl-sn-glycero-3-phospho-(1D-myo-inositol-3,5-bisphosphate) + H2O = a 1,2-diacyl-sn-glycero-3-phospho-(1D-myo-inositol-3-phosphate) + phosphate. The catalysed reaction is a 1,2-diacyl-sn-glycero-3-phospho-(1D-myo-inositol-4,5-bisphosphate) + H2O = a 1,2-diacyl-sn-glycero-3-phospho-(1D-myo-inositol 4-phosphate) + phosphate. It carries out the reaction a 1,2-diacyl-sn-glycero-3-phospho-(1D-myo-inositol-3,4,5-trisphosphate) + H2O = a 1,2-diacyl-sn-glycero-3-phospho-(1D-myo-inositol-3,4-bisphosphate) + phosphate. It catalyses the reaction O-phospho-L-seryl-[protein] + H2O = L-seryl-[protein] + phosphate. The PI(3,5)P2 regulatory complex regulates both the synthesis and turnover of phosphatidylinositol 3,5-bisphosphate (PtdIns(3,5)P2). In vitro, hydrolyzes all three D5-phosphorylated polyphosphoinositide substrates in the order PtdIns(4,5)P2 &gt; PtdIns(3,5)P2 &gt; PtdIns(3,4,5)P3. Plays a role in the biogenesis of endosome carrier vesicles (ECV) / multivesicular bodies (MVB) transport intermediates from early endosomes. Its function is as follows. Dual specificity phosphatase component of the PI(3,5)P2 regulatory complex which regulates both the synthesis and turnover of phosphatidylinositol 3,5-bisphosphate (PtdIns(3,5)P2). Catalyzes the dephosphorylation of phosphatidylinositol 3,5-bisphosphate (PtdIns(3,5)P2) to form phosphatidylinositol 3-phosphate. Has serine-protein phosphatase activity acting on PIKfyve to stimulate its lipid kinase activity, its catalytically activity being required for maximal PI(3,5)P2 production. In vitro, hydrolyzes all three D5-phosphorylated polyphosphoinositide and although displaying preferences for PtdIns(3,5)P2, it is capable of hydrolyzing PtdIns(3,4,5)P3 and PtdIns(4,5)P2, at least in vitro. In Mus musculus (Mouse), this protein is Polyphosphoinositide phosphatase (Fig4).